We begin with the raw amino-acid sequence, 301 residues long: Syntaxin-17 (301 aa).

At S2 the chain carries N-acetylserine. Residues 2-227 (SEDEEKVKLR…KNLQKAAKYK (226 aa)) lie on the Cytoplasmic side of the membrane. At K41 the chain carries N6-acetyllysine. The stretch at 49 to 128 (DKLHEEHINA…QVKNEEALLQ (80 aa)) forms a coiled coil. Y156 is subject to Phosphotyrosine; by ABL1. Residues 161 to 223 (IPRDQNAAES…EEGTKNLQKA (63 aa)) form the t-SNARE coiled-coil homology domain. The helical transmembrane segment at 228 to 248 (LAALPVAGAVIGGVVGGPIGL) threads the bilayer. The segment at 228–274 (LAALPVAGAVIGGVVGGPIGLLAGFKVAGIAAALGGGVLGFTGGKLI) is necessary and sufficient for localization to autophagosome. Topologically, residues 249–253 (LAGFK) are lumenal. Residues 254-274 (VAGIAAALGGGVLGFTGGKLI) form a helical membrane-spanning segment. A required for interaction with COPB1, TMED9 and TMED10 region spans residues 273–301 (LIQRRKQKMMEKLTSSCPDLPSQSDKKCS). At 275–301 (QRRKQKMMEKLTSSCPDLPSQSDKKCS) the chain is on the cytoplasmic side. At S288 the chain carries Phosphoserine. Positions 298-301 (KKCS) match the Endoplasmic reticulum retention signal motif.

This sequence belongs to the syntaxin family. In terms of assembly, forms a SNARE complex composed of VAMP8, SNAP29 and STX17 involved in fusion of autophagosome with lysosome. May interact with VAMP7. May interact with VTI1B. Probably interacts with BET1, SCFD1 and SEC22B. Interacts with PTPN2 and ABL1; involved in STX17 phosphorylation. Interacts with COPB1. Interacts with TMED9 and TMED10; the interaction is direct. Interacts with RUBCNL/PACER; promoting targeting of RUBCNL/PACER to autophagosome. Interacts with VAMP8, SNAP29, VPS39 and VPS41; these interactions are increased in the absence of TMEM39A. Interacts with IRGM; promoting STX17 recruitment to autophagosomes. Interacts with ATG8 proteins GABARAP and MAP1LC3B. Interacts with RNF115; this interaction enhances STX17 stability which in turn promotes autophagosome maturation. Interacts with RAB39A (GTP-bound); the interaction promotes autophagosome-lysosome membrane fusion driven by STX17-SNAP29-VAMP8. Interacts with RAB39B; the interaction may promote a different fonction in autophagy as compared with RAB39A. In terms of processing, phosphorylated at Tyr-156 probably by ABL1. Dephosphorylation by PTPN2; regulates exit from the endoplasmic reticulum. As to expression, detected in all tissues examined with higher expression in steroidogenic tissues including testis and adrenal gland (at protein level). Highly expressed in liver and testis. Also found in brain, heart, kidney, lung, placenta, skeletal muscle and spleen.

It localises to the endoplasmic reticulum membrane. The protein localises to the smooth endoplasmic reticulum membrane. The protein resides in the endoplasmic reticulum-Golgi intermediate compartment membrane. Its subcellular location is the cytoplasmic vesicle. It is found in the autophagosome membrane. It localises to the COPII-coated vesicle membrane. The protein localises to the cytoplasm. The protein resides in the cytosol. Its subcellular location is the mitochondrion membrane. It is found in the autolysosome membrane. Functionally, SNAREs, soluble N-ethylmaleimide-sensitive factor-attachment protein receptors, are essential proteins for fusion of cellular membranes. SNAREs localized on opposing membranes assemble to form a trans-SNARE complex, an extended, parallel four alpha-helical bundle that drives membrane fusion. STX17 is a SNARE of the autophagosome involved in autophagy through the direct control of autophagosome membrane fusion with the lysosome membrane. May also play a role in the early secretory pathway where it may maintain the architecture of the endoplasmic reticulum-Golgi intermediate compartment/ERGIC and Golgi and/or regulate transport between the endoplasmic reticulum, the ERGIC and the Golgi. The sequence is that of Syntaxin-17 from Rattus norvegicus (Rat).